Here is a 427-residue protein sequence, read N- to C-terminus: Tumor necrosis factor receptor superfamily member 16 (427 aa).

A signal peptide spans 1 to 31 (MRRAGAACSAMDRLRLLLLLLLLLGVSFGGA). Topologically, residues 32–254 (KETCSTGMYT…VVTRGTADNL (223 aa)) are extracellular. TNFR-Cys repeat units follow at residues 34–67 (TCST…QTVC), 69–110 (PCLD…DAVC), 111–149 (RCSY…NTVC), and 151–191 (ECPE…DAEC). 12 disulfide bridges follow: C35/C46, C47/C60, C50/C67, C70/C86, C89/C102, C92/C110, C112/C125, C128/C141, C131/C149, C152/C167, C170/C183, and C173/C191. N-linked (GlcNAc...) asparagine glycosylation is present at N63. A disordered region spans residues 197 to 223 (RWITRSTPPEGSDVTTPSTQEPEAPPE). The segment covering 200 to 217 (TRSTPPEGSDVTTPSTQE) has biased composition (polar residues). Residues 255–275 (IPVYCSILAAVVVGLVAYIAF) form a helical membrane-spanning segment. Over 276–427 (KRWNSCKQNK…CSESTATSPV (152 aa)) the chain is Cytoplasmic. Polar residues-rich tracts occupy residues 284–294 (NKQGANSRPVN) and 308–329 (SGIS…TASG). The segment at 284 to 334 (NKQGANSRPVNQTPPPEGEKLHSDSGISVDSQSLHDQQTHTQTASGQALKG) is disordered. The residue at position 314 (S314) is a Phosphoserine. A mediates interaction with KIDINS220 region spans residues 329–344 (GQALKGDGNLYSSLPL). A Death domain is found at 356 to 421 (GDTWRHLAGE…DIVESLCSES (66 aa)).

Homodimer; disulfide-linked. Heterodimer with SORCS2. The extracellular domains of the heterodimer bind NGF. The cytoplasmic region of the heterodimer binds TRIO. NGF binding mediates dissociation of TRIO from the receptor complex. Interacts with TRAF2, TRAF4, TRAF6, PTPN13 and RANBP9. Interacts through TRAF6 with SQSTM1 which bridges NGFR to NTRK1. Interacts with BEX1. Interacts with BEX3. Interacts with KIDINS220 and NTRK1. Can form a ternary complex with NTRK1 and KIDINS220 and this complex is affected by the expression levels of KIDINS220. An increase in KIDINS220 expression leads to a decreased association of NGFR and NTRK1. Interacts (via death domain) with RAB31. Interacts with NTRK2; may regulate the ligand specificity of the NTRK2 receptor. Interacts with LINGO1. Interacts with NRADD. Interacts with MAGED1; the interaction antagonizes the association NGFR:NTRK1. Interacts with RTN4R. Interacts (via death domain) with ARHGDIA and RIPK2. Interacts with BFAR. In terms of assembly, (Microbial infection) Binds to rabies virus glycoprotein Gs. N-glycosylated. O-glycosylated. Post-translationally, phosphorylated on serine residues. As to expression, detected in Schwann cells. Detected in embryonic brain, in hippocampus neurons (at protein level). Detected in brain and spinal cord.

It is found in the cell membrane. The protein resides in the cytoplasm. Its subcellular location is the perikaryon. The protein localises to the cell projection. It localises to the growth cone. It is found in the dendritic spine. Its function is as follows. Low affinity neurotrophin receptor which can bind to mature NGF, BDNF, NTF3, and NTF4. Forms a heterodimeric receptor with SORCS2 that binds the precursor forms of NGF (proNGF), BDNF (proBDNF) and NTF3 (proNT3) with high affinity, and has much lower affinity for mature NGF and BDNF. Plays an important role in differentiation and survival of specific neuronal populations during development. Can mediate cell survival as well as cell death of neural cells. The heterodimeric receptor formed with SORCS2 plays a role in proBDNF-dependent synaptic plasticity, in hippocampal long term depression (LTD) and long term potentiation (LTP). Plays a role in the inactivation of RHOA. Plays a role in the regulation of the translocation of GLUT4 to the cell surface in adipocytes and skeletal muscle cells in response to insulin, probably by regulating RAB31 activity, and thereby contributes to the regulation of insulin-dependent glucose uptake. Necessary for the circadian oscillation of the clock genes BMAL1, PER1, PER2 and NR1D1 in the suprachiasmatic nucleus (SCN) of the brain and in liver and of the genes involved in glucose and lipid metabolism in the liver. Functionally, (Microbial infection) Cell surface receptor for rabies virus glycoprotein Gs. Does not bind NGF, BDNF, NTF3, and NTF4. This chain is Tumor necrosis factor receptor superfamily member 16 (Ngfr), found in Mus musculus (Mouse).